The primary structure comprises 263 residues: Acyl-[acyl-carrier-protein]--UDP-N-acetylglucosamine O-acyltransferase (263 aa).

Belongs to the transferase hexapeptide repeat family. LpxA subfamily. Homotrimer.

Its subcellular location is the cytoplasm. It catalyses the reaction a (3R)-hydroxyacyl-[ACP] + UDP-N-acetyl-alpha-D-glucosamine = a UDP-3-O-[(3R)-3-hydroxyacyl]-N-acetyl-alpha-D-glucosamine + holo-[ACP]. It participates in glycolipid biosynthesis; lipid IV(A) biosynthesis; lipid IV(A) from (3R)-3-hydroxytetradecanoyl-[acyl-carrier-protein] and UDP-N-acetyl-alpha-D-glucosamine: step 1/6. Its function is as follows. Involved in the biosynthesis of lipid A, a phosphorylated glycolipid that anchors the lipopolysaccharide to the outer membrane of the cell. This is Acyl-[acyl-carrier-protein]--UDP-N-acetylglucosamine O-acyltransferase from Campylobacter jejuni subsp. jejuni serotype O:6 (strain 81116 / NCTC 11828).